We begin with the raw amino-acid sequence, 225 residues long: Protein-L-isoaspartate O-methyltransferase (225 aa).

S75 is an active-site residue.

This sequence belongs to the methyltransferase superfamily. L-isoaspartyl/D-aspartyl protein methyltransferase family.

Its subcellular location is the cytoplasm. The enzyme catalyses [protein]-L-isoaspartate + S-adenosyl-L-methionine = [protein]-L-isoaspartate alpha-methyl ester + S-adenosyl-L-homocysteine. Functionally, catalyzes the methyl esterification of L-isoaspartyl residues in peptides and proteins that result from spontaneous decomposition of normal L-aspartyl and L-asparaginyl residues. It plays a role in the repair and/or degradation of damaged proteins. This chain is Protein-L-isoaspartate O-methyltransferase, found in Xanthomonas oryzae pv. oryzae (strain PXO99A).